The chain runs to 509 residues: T-complex protein 11-like protein 1 (509 aa).

Over residues 1-12 (MSENLDKSHVDE) the composition is skewed to basic and acidic residues. A disordered region spans residues 1-57 (MSENLDKSHVDEAGEAEAAASEQGLEGALECSDETLQKKVKSDSPSSQRVGRPHSSP). Low complexity predominate over residues 16-30 (AEAAASEQGLEGALE). A Phosphoserine modification is found at serine 56.

The protein belongs to the TCP11 family.

This Mus musculus (Mouse) protein is T-complex protein 11-like protein 1 (Tcp11l1).